Consider the following 227-residue polypeptide: Terpene cyclase ltmB (227 aa).

7 consecutive transmembrane segments (helical) span residues L20–I40, M51–P71, V76–A96, A113–M133, I135–G155, L173–W195, and L206–L226.

The protein belongs to the paxB family.

The protein resides in the membrane. It participates in secondary metabolite biosynthesis. Its function is as follows. Terpene cyclase; part of the gene cluster that mediates the biosynthesis of lolitrems, indole-diterpene mycotoxins that are potent tremorgens in mammals, and are synthesized by clavicipitaceous fungal endophytes in association with their grass hosts. The geranylgeranyl diphosphate (GGPP) synthase ltmG is proposed to catalyze the first step in lolitrem biosynthesis. LtmG catalyzes a series of iterative condensations of isopentenyl diphosphate (IPP) with dimethylallyl diphosphate (DMAPP), geranyl diphosphate (GPP), and farnesyl diphosphate (FPP), to form GGPP. GGPP then condenses with indole-3-glycerol phosphate to form 3-geranylgeranylindole, an acyclic intermediate, to be incorporated into paxilline. Either ltmG or ltmC could be responsible for this step, as both are putative prenyl transferases. The FAD-dependent monooxygenase ltmM then catalyzes the epoxidation of the two terminal alkenes of the geranylgeranyl moiety, which is subsequently cyclized by ltmB, to paspaline. The cytochrome P450 monooxygenases ltmQ and ltmP can sequentially oxidize paspaline to terpendole E and terpendole F. Alternatively, ltmP converts paspaline to an intermediate which is oxidized by ltmQ to terpendole F. LtmF, ltmK, ltmE and ltmJ appear to be unique to the epichloe endophytes. The prenyltransferase ltmF is involved in the 27-hydroxyl-O-prenylation. The cytochrome P450 monooxygenase ltmK is required for the oxidative acetal ring formation. The multi-functional prenyltransferase ltmE is required for C20- and C21-prenylations of the indole ring of paspalanes and acts together with the cytochrome P450 monooxygenase ltmJ to yield lolitremanes by multiple oxidations and ring closures. The stereoisomer pairs of lolitriol and lolitrem N or lolitrem B and lolitrem F may be attributed to variations in the way in which ring closure can occur under the action of ltmJ. While the major product of this pathway is lolitrem B, the prenyl transferases and cytochrome P450 monooxygenases identified in this pathway have a remarkable versatility in their regio- and stereo-specificities to generate a diverse range of metabolites that are products of a metabolic grid rather than a linear pathway. This chain is Terpene cyclase ltmB, found in Epichloe festucae var. lolii (Neotyphodium lolii).